Consider the following 380-residue polypeptide: Probable acyl-CoA dehydrogenase YngJ (380 aa).

FAD contacts are provided by residues 123–132 (FGLTEPNAGS), 156–158 (WIT), arginine 269, and 337–341 (QIHGG). Glutamate 364 (proton acceptor) is an active-site residue. Position 366–368 (366–368 (TSE)) interacts with FAD.

This sequence belongs to the acyl-CoA dehydrogenase family. FAD is required as a cofactor.

The enzyme catalyses a 2,3-saturated acyl-CoA + A = a 2,3-dehydroacyl-CoA + AH2. The sequence is that of Probable acyl-CoA dehydrogenase YngJ (yngJ) from Bacillus subtilis (strain 168).